A 77-amino-acid polypeptide reads, in one-letter code: MKVFSFTIGLVVIISLFAFALAYDEETDLMKKLVEMERAIEQRIICAPEGGPCVVGIGCCKGYSCAPGLLGLVGHCQ.

An N-terminal signal peptide occupies residues 1-22 (MKVFSFTIGLVVIISLFAFALA). A propeptide spanning residues 23-43 (YDEETDLMKKLVEMERAIEQR) is cleaved from the precursor. Intrachain disulfides connect cysteine 46-cysteine 60, cysteine 53-cysteine 65, and cysteine 59-cysteine 76.

In terms of tissue distribution, expressed by the venom gland.

The protein localises to the secreted. Its function is as follows. Intrathorax injection into crickets causes paralysis prolonged for more than 60 minutes, followed by recovery. The protein is U8-hexatoxin-Mg1a of Macrothele gigas (Japanese funnel web spider).